We begin with the raw amino-acid sequence, 24 residues long: MSMGIAARPPRAALLPPPSVPRSR.

The segment covering 1 to 14 has biased composition (low complexity); that stretch reads MSMGIAARPPRAAL. Residues 1–24 form a disordered region; it reads MSMGIAARPPRAALLPPPSVPRSR. Positions 15–24 are enriched in pro residues; the sequence is LPPPSVPRSR.

Its function is as follows. This peptide is involved in the control mechanism of the synthesis of the macrolide-lincosamide-streptogramin B resistance protein. The sequence is that of Erythromycin resistance leader peptide from Streptomyces fradiae (Streptomyces roseoflavus).